Reading from the N-terminus, the 262-residue chain is MILVLDAGNTNMVLGLYEDKNLIADWRLSTDPLRTADEYSIQVIQLFLQSNLRLEDVEGVIVSSVVPNIMYSVEHMVAKYFKKKPIIVGPGTKTGINIKYDNPKEVGADRIVNAVAAHEIYKKPLVIIDFGTATTFCAVTQSGDYLGGAIAPGVKISSEALFEKAAKLPRVELMKPSSVICKNTVSSMQAGMTYGYGGLVDHIVSKIKQELMDSGEKEPLVVATGGLAKLISEESETIDIIHPFLTLEGLRIIYEKNKDLDA.

Aspartate 6–valine 13 serves as a coordination point for ATP. Substrate is bound by residues tyrosine 100 and glycine 107–arginine 110. Aspartate 109 acts as the Proton acceptor in catalysis. Aspartate 129 serves as a coordination point for K(+). Threonine 132 provides a ligand contact to ATP. A substrate-binding site is contributed by threonine 184.

It belongs to the type III pantothenate kinase family. In terms of assembly, homodimer. NH4(+) is required as a cofactor. K(+) serves as cofactor.

It is found in the cytoplasm. The catalysed reaction is (R)-pantothenate + ATP = (R)-4'-phosphopantothenate + ADP + H(+). Its pathway is cofactor biosynthesis; coenzyme A biosynthesis; CoA from (R)-pantothenate: step 1/5. Catalyzes the phosphorylation of pantothenate (Pan), the first step in CoA biosynthesis. The chain is Type III pantothenate kinase from Clostridium tetani (strain Massachusetts / E88).